Here is a 542-residue protein sequence, read N- to C-terminus: Membrane protein insertase YidC (542 aa).

5 helical membrane passes run 7 to 27 (LLVM…QQDF), 338 to 358 (FALL…IIGV), 417 to 437 (MGGC…YWTF), 455 to 475 (LSAQ…MFLL), and 494 to 514 (FMPV…VLYW).

This sequence belongs to the OXA1/ALB3/YidC family. Type 1 subfamily. Interacts with the Sec translocase complex via SecD. Specifically interacts with transmembrane segments of nascent integral membrane proteins during membrane integration.

It is found in the cell inner membrane. Functionally, required for the insertion and/or proper folding and/or complex formation of integral membrane proteins into the membrane. Involved in integration of membrane proteins that insert both dependently and independently of the Sec translocase complex, as well as at least some lipoproteins. Aids folding of multispanning membrane proteins. This is Membrane protein insertase YidC from Actinobacillus pleuropneumoniae serotype 7 (strain AP76).